The primary structure comprises 784 residues: MEFITQNQAITSLSMINTDIDQPKASLRSRFLLHLIICLLFFVPPCSSQAWDGVVITQADYQGLQAVKQELIDPRGFLRSWNGSGFSACSGGWAGIKCAQGQVIVIQLPWKSLGGRISEKIGQLQALRKLSLHDNNLGGSIPMSLGLIPNLRGVQLFNNRLTGSIPASLGVSHFLQTLDLSNNLLSEIIPPNLADSSKLLRLNLSFNSLSGQIPVSLSRSSSLQFLALDHNNLSGPILDTWGSKSLNLRVLSLDHNSLSGPFPFSLCNLTQLQDFSFSHNRIRGTLPSELSKLTKLRKMDISGNSVSGHIPETLGNISSLIHLDLSQNKLTGEIPISISDLESLNFFNVSYNNLSGPVPTLLSQKFNSSSFVGNSLLCGYSVSTPCPTLPSPSPEKERKPSHRNLSTKDIILIASGALLIVMLILVCVLCCLLRKKANETKAKGGEAGPGAVAAKTEKGGEAEAGGETGGKLVHFDGPMAFTADDLLCATAEIMGKSTYGTVYKATLEDGSQVAVKRLREKITKSQKEFENEINVLGRIRHPNLLALRAYYLGPKGEKLVVFDYMSRGSLATFLHARGPDVHINWPTRMSLIKGMARGLFYLHTHANIIHGNLTSSNVLLDENITAKISDYGLSRLMTAAAGSSVIATAGALGYRAPELSKLKKANTKTDVYSLGVIILELLTGKSPSEALNGVDLPQWVATAVKEEWTNEVFDLELLNDVNTMGDEILNTLKLALHCVDATPSTRPEAQQVMTQLGEIRPEETTATTSEPLIDVPEASASTSQ.

An N-terminal signal peptide occupies residues 1–48 (MEFITQNQAITSLSMINTDIDQPKASLRSRFLLHLIICLLFFVPPCSS). At 49-409 (QAWDGVVITQ…PSHRNLSTKD (361 aa)) the chain is on the extracellular side. Asparagine 82 carries an N-linked (GlcNAc...) asparagine glycan. 10 LRR repeats span residues 126–148 (ALRK…LGLI), 150–172 (NLRG…LGVS), 174–197 (FLQT…ADSS), 198–220 (KLLR…LSRS), 222–242 (SLQF…DTWG), 247–268 (NLRV…SLCN), 271–294 (QLQD…SKLT), 295–317 (KLRK…LGNI), 319–342 (SLIH…SDLE), and 343–365 (SLNF…LSQK). 3 N-linked (GlcNAc...) asparagine glycosylation sites follow: asparagine 203, asparagine 232, and asparagine 268. N-linked (GlcNAc...) asparagine glycosylation is present at asparagine 316. N-linked (GlcNAc...) asparagine glycosylation is found at asparagine 348, asparagine 353, asparagine 367, and asparagine 404. A helical transmembrane segment spans residues 410–430 (IILIASGALLIVMLILVCVLC). Residues 431–784 (CLLRKKANET…VPEASASTSQ (354 aa)) lie on the Cytoplasmic side of the membrane. Residues 441–467 (KAKGGEAGPGAVAAKTEKGGEAEAGGE) form a disordered region. The 286-residue stretch at 488 to 773 (CATAEIMGKS…TTATTSEPLI (286 aa)) folds into the Protein kinase domain. Residues 494 to 502 (MGKSTYGTV) and lysine 516 each bind ATP. Residues 760 to 784 (RPEETTATTSEPLIDVPEASASTSQ) form a disordered region.

Belongs to the protein kinase superfamily. Ser/Thr protein kinase family. Interacts with AGL24. Autophosphorylated. In terms of tissue distribution, expressed in meristems, including roots, vegetative, inflorescence and floral meristems, and in embryos.

Its subcellular location is the cell membrane. It catalyses the reaction L-seryl-[protein] + ATP = O-phospho-L-seryl-[protein] + ADP + H(+). The catalysed reaction is L-threonyl-[protein] + ATP = O-phospho-L-threonyl-[protein] + ADP + H(+). Functionally, can phosphorylate AGL24. The polypeptide is Probable leucine-rich repeat receptor-like protein kinase IMK3 (IMK3) (Arabidopsis thaliana (Mouse-ear cress)).